The following is an 855-amino-acid chain: Sucrose synthase 5 (855 aa).

Residues 279 to 758 (SIFNIVIFSI…GLQRICECYT (480 aa)) are GT-B glycosyltransferase.

Belongs to the glycosyltransferase 1 family. Plant sucrose synthase subfamily. Predominantly expressed in roots, flowers and immature seeds.

It localises to the cytoplasm. It is found in the membrane. The catalysed reaction is an NDP-alpha-D-glucose + D-fructose = a ribonucleoside 5'-diphosphate + sucrose + H(+). In terms of biological role, sucrose-cleaving enzyme that provides UDP-glucose and fructose for various metabolic pathways. In Oryza sativa subsp. japonica (Rice), this protein is Sucrose synthase 5 (SUS5).